Reading from the N-terminus, the 1390-residue chain is Contactin (1390 aa).

The signal sequence occupies residues 1–18 (MLAKIGLLASILVLNLVG). The segment at 25–67 (SENLPDPDPQSGQQPQNYQPSYNKDYSPRYNPLYTGQQSADPN) is disordered. Polar residues predominate over residues 58 to 67 (YTGQQSADPN). Ig-like C2-type domains follow at residues 362–463 (PYFV…AHLN), 468–561 (MEFN…LRVT), 576–656 (PKVF…IYIN), 661–745 (PQFT…TSFS), 756–843 (PSFK…ARVI), and 848–939 (IRFI…TSVS). An N-linked (GlcNAc...) asparagine glycan is attached at N369. Intrachain disulfides connect C388/C446, C489/C540, C593/C640, and C682/C734. N-linked (GlcNAc...) asparagine glycans are attached at residues N537, N604, N629, N691, and N774. 2 disulfides stabilise this stretch: C779–C827 and C870–C923. Residues N912, N986, and N991 are each glycosylated (N-linked (GlcNAc...) asparagine). Fibronectin type-III domains lie at 946-1048 (APGG…TYED), 1053-1151 (APRN…SAED), 1156-1254 (APQK…TYRK), and 1259-1357 (PPSS…MGKT). N1166, N1171, and N1307 each carry an N-linked (GlcNAc...) asparagine glycan. The GPI-anchor amidated alanine moiety is linked to residue A1362. The propeptide at 1363-1390 (NTRHGHNINTALILSTLLLISTFLYTSQ) is removed in mature form.

The protein belongs to the immunoglobulin superfamily. Contactin family. As to quaternary structure, forms a complex with Nrg and Nrx. Forms a complex composed of septa junction proteins Nrx-IV/Nrx, Tsf2/MTf, Cont and Nrg during late embryogenesis. Post-translationally, N-glycosylated. As to expression, expressed in ectodermally derived epithelial cells from stage 12. All these tissues, such as epidermis, hindgut, foregut, salivary glands and trachea, which contain pleated septate junctions. Expressed by ectodermally derived epithelial cells and along peripheral nerves. Not present in midline glial cells. Expressed in epithelial cells and glial cells of peripheral nerves.

Its subcellular location is the cell membrane. It is found in the cell junction. It localises to the septate junction. Required for organization of septate junctions and paracellular barrier functions. Septate junctions, which are the equivalent of vertebrates tight junctions, are characterized by regular arrays of transverse structures that span the intermembrane space and form a physical barrier to diffusion. The protein is Contactin (Cont) of Drosophila melanogaster (Fruit fly).